Reading from the N-terminus, the 593-residue chain is MGSGSSSYRPKAIYLDIDGRIQKVIFSKYCNSSDIMDLFCIATGLPRNTTISLLTTDDAMVSIDPTMPANSERTPYKVRPVAIKQLSAGVEDKRTTSRGQSAERPLRDRRVVGLEQPRREGAFESGQVEPRPREPQGCCQEGQRIPPEREELIQSVLAQVAEQFSRAFKINELKAEVANHLAVLEKRVELEGLKVVEIEKCKSDIKKMREELAARSSRTNCPCKYSFLDNHKKLTPRRDVPTYPKYLLSPETIEALRKPTFDVWLWEPNEMLSCLEHMYHDLGLVRDFSINPVTLRRWLFCVHDNYRNNPFHNFRHCFCVAQMMYSMVWLCSLQENFSQMDILILMTAAICHDLDHPGYNNTYQINARTELAVRYNDISPLENHHCAVAFQILAEPECNIFSNIPPDGFKQIRQGMITLILATDMARHAEIMDSFKEKMENFDYSNEEHMTLLKMILIKCCDISNEVRPMEVAEPWVDCLLEEYFMQSDREKSEGLPVAPFMDRDKVTKATAQIGFIKFVLIPMFETVTKLFPMVEEIMLQPLWESRDRYEELKRIDDAMKELQKKTDSLTSGATEKSRERSRDVKNSEGDCA.

Residues 87–142 form a disordered region; that stretch reads SAGVEDKRTTSRGQSAERPLRDRRVVGLEQPRREGAFESGQVEPRPREPQGCCQEG. Residues 104–122 are compositionally biased toward basic and acidic residues; the sequence is RPLRDRRVVGLEQPRREGA. Residues 236–557 enclose the PDEase domain; sequence PRRDVPTYPK…DRYEELKRID (322 aa). The Proton donor role is filled by His-312. 312–316 lines the 3',5'-cyclic GMP pocket; the sequence is HNFRH. His-316, His-352, and Asp-353 together coordinate Zn(2+). Asp-353 is a binding site for 3',5'-cyclic GMP. Asp-353 lines the Mg(2+) pocket. Ser-379 is modified (phosphoserine). 3',5'-cyclic GMP-binding positions include Asp-462, Tyr-484, and 512–513; that span reads AQ. Asp-462 provides a ligand contact to Zn(2+). The interval 564 to 593 is disordered; sequence QKKTDSLTSGATEKSRERSRDVKNSEGDCA. The segment covering 576-593 has biased composition (basic and acidic residues); sequence EKSRERSRDVKNSEGDCA.

This sequence belongs to the cyclic nucleotide phosphodiesterase family. PDE9 subfamily. Homodimer. It depends on Zn(2+) as a cofactor. Mg(2+) serves as cofactor.

It localises to the cell projection. It is found in the ruffle membrane. The protein resides in the cytoplasm. The protein localises to the perinuclear region. Its subcellular location is the golgi apparatus. It localises to the endoplasmic reticulum. It is found in the cell membrane. The protein resides in the sarcolemma. The enzyme catalyses 3',5'-cyclic GMP + H2O = GMP + H(+). The protein operates within purine metabolism; 3',5'-cyclic GMP degradation; GMP from 3',5'-cyclic GMP: step 1/1. With respect to regulation, specifically inhibited by a compound named 3r ((R)-2-((1-cyclopentyl-4-hydroxy-1H-pyrazolo[3,4-d]pyrimidin-6- yl)amino)-N-(4-methoxyphenyl)propanamide); the inhibitor forms a hydrogen bond with Tyr-484, Ala-512 and Gln-513. Its function is as follows. Specifically hydrolyzes the second messenger cGMP, which is a key regulator of many important physiological processes. Highly specific: compared to other members of the cyclic nucleotide phosphodiesterase family, has the highest affinity and selectivity for cGMP. Specifically regulates natriuretic-peptide-dependent cGMP signaling in heart, acting as a regulator of cardiac hypertrophy in myocytes and muscle. Does not regulate nitric oxide-dependent cGMP in heart. Additional experiments are required to confirm whether its ability to hydrolyze natriuretic-peptide-dependent cGMP is specific to heart or is a general feature of the protein. In brain, involved in cognitive function, such as learning and long-term memory. In Pan troglodytes (Chimpanzee), this protein is High affinity cGMP-specific 3',5'-cyclic phosphodiesterase 9A (PDE9A).